Here is a 94-residue protein sequence, read N- to C-terminus: Small ribosomal subunit protein uS19 (94 aa).

The protein belongs to the universal ribosomal protein uS19 family.

Functionally, protein S19 forms a complex with S13 that binds strongly to the 16S ribosomal RNA. This chain is Small ribosomal subunit protein uS19, found in Caldicellulosiruptor saccharolyticus (strain ATCC 43494 / DSM 8903 / Tp8T 6331).